The sequence spans 285 residues: Acetyl-coenzyme A carboxylase carboxyl transferase subunit beta (285 aa).

A CoA carboxyltransferase N-terminal domain is found at 23-285 (VFRRCDGCSH…HLTAGRRARR (263 aa)). Cysteine 27, cysteine 30, cysteine 46, and cysteine 49 together coordinate Zn(2+). The C4-type zinc-finger motif lies at 27–49 (CDGCSHTHDAAELARTFEVCSQC).

This sequence belongs to the AccD/PCCB family. In terms of assembly, acetyl-CoA carboxylase is a heterohexamer composed of biotin carboxyl carrier protein (AccB), biotin carboxylase (AccC) and two subunits each of ACCase subunit alpha (AccA) and ACCase subunit beta (AccD). The cofactor is Zn(2+).

The protein resides in the cytoplasm. It carries out the reaction N(6)-carboxybiotinyl-L-lysyl-[protein] + acetyl-CoA = N(6)-biotinyl-L-lysyl-[protein] + malonyl-CoA. Its pathway is lipid metabolism; malonyl-CoA biosynthesis; malonyl-CoA from acetyl-CoA: step 1/1. In terms of biological role, component of the acetyl coenzyme A carboxylase (ACC) complex. Biotin carboxylase (BC) catalyzes the carboxylation of biotin on its carrier protein (BCCP) and then the CO(2) group is transferred by the transcarboxylase to acetyl-CoA to form malonyl-CoA. This chain is Acetyl-coenzyme A carboxylase carboxyl transferase subunit beta, found in Sorangium cellulosum (strain So ce56) (Polyangium cellulosum (strain So ce56)).